Consider the following 470-residue polypeptide: UTP--glucose-1-phosphate uridylyltransferase 1 (470 aa).

At Ala2 the chain carries N-acetylalanine. UTP is bound by residues Leu86–Gly89, Lys100, Gln163, and Gly192. Residue Gly88–Gly89 participates in substrate binding. Residues His193 and Asn221 to Asp223 contribute to the substrate site. Residues Asp223 and Lys361 each coordinate UTP.

It belongs to the UDPGP type 1 family. In terms of tissue distribution, expressed in roots, rosette leaves, cauline leaves, stems, flowers and siliques.

It localises to the cytoplasm. The enzyme catalyses alpha-D-glucose 1-phosphate + UTP + H(+) = UDP-alpha-D-glucose + diphosphate. Its function is as follows. Converts glucose 1-phosphate to UDP-glucose, which is the major glycosyl donor for polysaccharides. Acts redundantly with UGP2 and is essential for the synthesis of sucrose, starch and cell wall, and callose deposition. Involved in the regulation of the programmed cell death (PCD) induced by the fungal toxin fumonisin B1 (FB1). The sequence is that of UTP--glucose-1-phosphate uridylyltransferase 1 from Arabidopsis thaliana (Mouse-ear cress).